Here is a 403-residue protein sequence, read N- to C-terminus: D-galactonate dehydratase family member RspA (403 aa).

Substrate-binding residues include N37 and H122. The active-site Proton donor/acceptor is Y159. D211 contacts Mg(2+). The Proton donor/acceptor role is filled by H213. The Mg(2+) site is built by E237 and E263. The substrate site is built by E263, R284, H313, D317, and E340.

Belongs to the mandelate racemase/muconate lactonizing enzyme family. GalD subfamily. Mg(2+) is required as a cofactor.

It carries out the reaction D-mannonate = 2-dehydro-3-deoxy-D-gluconate + H2O. The enzyme catalyses D-gluconate = 2-dehydro-3-deoxy-D-gluconate + H2O. In terms of biological role, has low dehydratase activity with D-mannonate and D-gluconate, suggesting that these are not physiological substrates and that it has no significant role in the in vivo degradation of these compounds. Has no detectable activity with a panel of 70 other acid sugars (in vitro). The protein is D-galactonate dehydratase family member RspA (rspA) of Halomonas elongata (strain ATCC 33173 / DSM 2581 / NBRC 15536 / NCIMB 2198 / 1H9).